The primary structure comprises 71 residues: Small ribosomal subunit protein bS21 (71 aa).

A compositionally biased stretch (basic residues) spans 48-59 (KAAAAVKRHAKK). The disordered stretch occupies residues 48 to 71 (KAAAAVKRHAKKVQRENRKFQRLY). The span at 60-71 (VQRENRKFQRLY) shows a compositional bias: basic and acidic residues.

The protein belongs to the bacterial ribosomal protein bS21 family.

The protein is Small ribosomal subunit protein bS21 of Teredinibacter turnerae (strain ATCC 39867 / T7901).